The primary structure comprises 459 residues: Tubulin gamma chain (459 aa).

A GTP-binding site is contributed by Ala-142–Gly-148. The interval Ala-440–Gly-459 is disordered.

This sequence belongs to the tubulin family.

It localises to the cytoplasm. It is found in the cytoskeleton. Its subcellular location is the microtubule organizing center. The protein localises to the spindle pole body. In terms of biological role, tubulin is the major constituent of microtubules. The gamma chain is found at microtubule organizing centers (MTOC) such as the spindle poles or the centrosome, suggesting that it is involved in the minus-end nucleation of microtubule assembly. The chain is Tubulin gamma chain (TUB4) from Cochliobolus heterostrophus (strain C5 / ATCC 48332 / race O) (Southern corn leaf blight fungus).